The primary structure comprises 274 residues: Pyrroline-5-carboxylate reductase 3 (274 aa).

Belongs to the pyrroline-5-carboxylate reductase family. Homodecamer; composed of 5 homodimers.

It localises to the cytoplasm. It catalyses the reaction L-proline + NADP(+) = (S)-1-pyrroline-5-carboxylate + NADPH + 2 H(+). The catalysed reaction is L-proline + NAD(+) = (S)-1-pyrroline-5-carboxylate + NADH + 2 H(+). It functions in the pathway amino-acid biosynthesis; L-proline biosynthesis; L-proline from L-glutamate 5-semialdehyde: step 1/1. Oxidoreductase that catalyzes the last step in proline biosynthesis, which corresponds to the reduction of pyrroline-5-carboxylate (P5C) to L-proline using NAD(P)H. Proline is synthesized from either glutamate or ornithine; both are converted to P5C, and then to proline via pyrroline-5-carboxylate reductases (PYCRs). PYCR3 is exclusively linked to the biosynthesis of proline from ornithine. The protein is Pyrroline-5-carboxylate reductase 3 of Xenopus laevis (African clawed frog).